Here is a 506-residue protein sequence, read N- to C-terminus: Ribose import ATP-binding protein RbsA 1 (506 aa).

2 consecutive ABC transporter domains span residues 5–241 and 254–498; these read LALT…VGRR and RDAA…TSDA. Position 37–44 (37–44) interacts with ATP; it reads GENGAGKS.

Belongs to the ABC transporter superfamily. Ribose importer (TC 3.A.1.2.1) family. In terms of assembly, the complex is composed of an ATP-binding protein (RbsA), two transmembrane proteins (RbsC) and a solute-binding protein (RbsB).

Its subcellular location is the cell inner membrane. The enzyme catalyses D-ribose(out) + ATP + H2O = D-ribose(in) + ADP + phosphate + H(+). Its function is as follows. Part of the ABC transporter complex RbsABC involved in ribose import. Responsible for energy coupling to the transport system. This is Ribose import ATP-binding protein RbsA 1 from Burkholderia thailandensis (strain ATCC 700388 / DSM 13276 / CCUG 48851 / CIP 106301 / E264).